The following is a 210-amino-acid chain: Rho-related GTP-binding protein RhoD (210 aa).

Position 24–31 (24–31 (GDGGCGKT)) interacts with GTP. Positions 46-54 (YTPTVFERY) match the Effector region motif. Residues 71-75 (DTAGQ) and 129-132 (CKTD) each bind GTP. Residue Cys-207 is modified to Cysteine methyl ester. Cys-207 carries the S-geranylgeranyl cysteine lipid modification. The propeptide at 208 to 210 (VVT) is removed in mature form.

Belongs to the small GTPase superfamily. Rho family. Interacts (in GTP-bound form) with DIAPH2 isoform 3, DAPK3, FILIP1 and WHAMM. Interacts with PAK5. Interacts (independent of GTP-loaded status) with ANKFY1. In terms of tissue distribution, heart, placenta, liver, skeletal muscle, and pancreas and, with weaker intensity, in several other tissues.

The protein resides in the cell membrane. Its subcellular location is the early endosome. Involved in endosome dynamics. May coordinate membrane transport with the function of the cytoskeleton. Involved in the internalization and trafficking of activated tyrosine kinase receptors such as PDGFRB. Participates in the reorganization of actin cytoskeleton; the function seems to involve WHAMM and includes regulation of filopodia formation and actin filament bundling. Can modulate the effect of DAPK3 in reorganization of actin cytoskeleton and focal adhesion dissolution. In Homo sapiens (Human), this protein is Rho-related GTP-binding protein RhoD.